The sequence spans 78 residues: Large ribosomal subunit protein bL28 (78 aa).

This sequence belongs to the bacterial ribosomal protein bL28 family.

The sequence is that of Large ribosomal subunit protein bL28 from Synechococcus sp. (strain JA-2-3B'a(2-13)) (Cyanobacteria bacterium Yellowstone B-Prime).